The sequence spans 861 residues: Transcription factor opdJ (861 aa).

Residues 11–37 constitute a DNA-binding region (zn(2)-C6 fungal-type); that stretch reads CSHCSKAKARCDRKVPCSRCVSKQLVC.

It localises to the nucleus. Its function is as follows. Transcription factor that positively regulates the gene cluster that mediates the biosynthesis of oxopyrrolidines, polyketide-amino acid hybrid compounds with feature structures of tetramic acid. This Penicillium oxalicum (strain 114-2 / CGMCC 5302) (Penicillium decumbens) protein is Transcription factor opdJ.